A 136-amino-acid chain; its full sequence is ATP synthase epsilon chain (136 aa).

The protein belongs to the ATPase epsilon chain family. In terms of assembly, F-type ATPases have 2 components, CF(1) - the catalytic core - and CF(0) - the membrane proton channel. CF(1) has five subunits: alpha(3), beta(3), gamma(1), delta(1), epsilon(1). CF(0) has three main subunits: a, b and c.

It is found in the cell inner membrane. Functionally, produces ATP from ADP in the presence of a proton gradient across the membrane. In Afipia carboxidovorans (strain ATCC 49405 / DSM 1227 / KCTC 32145 / OM5) (Oligotropha carboxidovorans), this protein is ATP synthase epsilon chain.